The following is an 892-amino-acid chain: Translation initiation factor IF-2 (892 aa).

Disordered regions lie at residues 144 to 176 (QQRLAEVDRQRVEEQERKRREEEQAELERQKTE) and 189 to 298 (SNSV…SGAH). Positions 207 to 219 (LPRTVRPTPAARP) are enriched in low complexity. The tr-type G domain occupies 391-560 (PRPPVVTIMG…SIQAEVLELK (170 aa)). Residues 400-407 (GHVDHGKT), 446-450 (DTPGH), and 500-503 (SKID) each bind GTP.

Belongs to the TRAFAC class translation factor GTPase superfamily. Classic translation factor GTPase family. IF-2 subfamily.

The protein resides in the cytoplasm. Functionally, one of the essential components for the initiation of protein synthesis. Protects formylmethionyl-tRNA from spontaneous hydrolysis and promotes its binding to the 30S ribosomal subunits. Also involved in the hydrolysis of GTP during the formation of the 70S ribosomal complex. The sequence is that of Translation initiation factor IF-2 from Xylella fastidiosa (strain M12).